The sequence spans 396 residues: S-adenosylmethionine synthase (396 aa).

Histidine 16 is a binding site for ATP. Aspartate 18 is a binding site for Mg(2+). K(+) is bound at residue glutamate 44. Glutamate 57 and glutamine 100 together coordinate L-methionine. The flexible loop stretch occupies residues 100-110 (QSPDIAQGVDR). ATP contacts are provided by residues 167-169 (DAK), 232-233 (RF), aspartate 241, 247-248 (RK), alanine 264, and lysine 268. Aspartate 241 contributes to the L-methionine binding site. Lysine 272 contributes to the L-methionine binding site.

It belongs to the AdoMet synthase family. Homotetramer; dimer of dimers. Mg(2+) serves as cofactor. The cofactor is K(+).

Its subcellular location is the cytoplasm. The enzyme catalyses L-methionine + ATP + H2O = S-adenosyl-L-methionine + phosphate + diphosphate. It functions in the pathway amino-acid biosynthesis; S-adenosyl-L-methionine biosynthesis; S-adenosyl-L-methionine from L-methionine: step 1/1. Its function is as follows. Catalyzes the formation of S-adenosylmethionine (AdoMet) from methionine and ATP. The overall synthetic reaction is composed of two sequential steps, AdoMet formation and the subsequent tripolyphosphate hydrolysis which occurs prior to release of AdoMet from the enzyme. In Ralstonia nicotianae (strain ATCC BAA-1114 / GMI1000) (Ralstonia solanacearum), this protein is S-adenosylmethionine synthase.